We begin with the raw amino-acid sequence, 570 residues long: Chaperonin GroEL 1 (570 aa).

ATP is bound by residues 42 to 45, lysine 63, 99 to 103, glycine 427, and aspartate 507; these read TLGP and DGTTT. Positions 537-570 are disordered; sequence EDEDDDDGGGGGGGGMPAGGAGGMGGMGGMGGMM. A compositionally biased stretch (gly residues) spans 545-570; sequence GGGGGGGMPAGGAGGMGGMGGMGGMM.

This sequence belongs to the chaperonin (HSP60) family. As to quaternary structure, forms a cylinder of 14 subunits composed of two heptameric rings stacked back-to-back. Interacts with the co-chaperonin GroES.

Its subcellular location is the cytoplasm. The catalysed reaction is ATP + H2O + a folded polypeptide = ADP + phosphate + an unfolded polypeptide.. In terms of biological role, together with its co-chaperonin GroES, plays an essential role in assisting protein folding. The GroEL-GroES system forms a nano-cage that allows encapsulation of the non-native substrate proteins and provides a physical environment optimized to promote and accelerate protein folding. This is Chaperonin GroEL 1 from Salinibacter ruber (strain DSM 13855 / M31).